The following is a 260-amino-acid chain: Achaete-scute homolog 2 (260 aa).

2 disordered regions span residues alanine 85–arginine 126 and proline 191–serine 239. 2 stretches are compositionally biased toward low complexity: residues alanine 110–alanine 121 and threonine 200–proline 218. The 53-residue stretch at alanine 118 to leucine 170 folds into the bHLH domain.

As to quaternary structure, efficient DNA binding requires dimerization with another bHLH protein. Forms heterodimers with bHLH transcription factor TCF3. May not heterodimerise with bHLH protein HAND1. In terms of tissue distribution, expressed in Schwann cells in the peripheral nerve (at protein level). Also expressed by endothelial cells (at protein level). May be expressed in neuronal precursor cells.

The protein resides in the nucleus. The protein localises to the cytoplasm. Functionally, transcription factor. Binds to E-box motifs 5'-CANNTG-3' in the regulatory elements of target genes, probably as a heterodimer with another basic helix-loop-helix (bHLH) protein such as the transcription factor TCF3. May bind both open and closed chromatin, acting as a pioneer transcription factor to allow other factors to bind and activate lineage-specific genes. Required during post-implantation development for the generation of some differentiated trophoblast cell types. Transcriptional activity of ASCL2 may be antagonised in a subset of trophoblast cells by bHLH transcription factor HAND1, perhaps by competing for dimerization with other bHLH proteins. Involved in differentiation and function of follicular T-helper (Tfh) cells, thereby playing a role in germinal center responses; probably modulates expression of genes involved in Tfh cell function, such as BCL6. May also act as a suppressor of Th1-, Th2- and Th17-cell differentiation. Induces the formation of stem cells in intestinal crypts in vitro, synergistically activating transcription of target genes, such as SOX9, together with TCF4/beta-catenin. May form a bistable transcriptional switch, controlling expression of its own gene together with Wnt/R-spondin signaling, and thereby maintaining stem cell characteristics. Modulates expression of target genes, including perhaps down-regulating EGR1/Krox24 and chemokine CXCL10/Mob-1 and up-regulating CXCR4 and CDKN1C/p57kip2, in Schwann cells. May play a role in reducing proliferation of Schwann cells, perhaps acting via modulation of expression of CDKN1C. May be dispensable for blastocyst formation and later embryonic function. May be involved in the determination of neuronal precursors. The polypeptide is Achaete-scute homolog 2 (Ascl2) (Rattus norvegicus (Rat)).